A 392-amino-acid polypeptide reads, in one-letter code: Alanine--glyoxylate aminotransferase (392 aa).

The residue at position 209 (Lys209) is an N6-(pyridoxal phosphate)lysine. Lys225 is modified (N6-acetyllysine; alternate). Lys225 is modified (N6-succinyllysine; alternate). An N6-acetyllysine mark is found at Lys234 and Lys312. Arg360 contributes to the substrate binding site. Residues 390 to 392 carry the Microbody targeting signal motif; it reads SQL.

The protein belongs to the class-V pyridoxal-phosphate-dependent aminotransferase family. In terms of assembly, homodimer. Pyridoxal 5'-phosphate is required as a cofactor.

The protein localises to the peroxisome. It carries out the reaction L-serine + pyruvate = 3-hydroxypyruvate + L-alanine. The catalysed reaction is glyoxylate + L-alanine = glycine + pyruvate. Its function is as follows. Peroxisomal aminotransferase that catalyzes the transamination of glyoxylate to glycine and contributes to the glyoxylate detoxification. Also catalyzes the transamination between L-serine and pyruvate and contributes to gluconeogenesis from the L-serine metabolism. In Oryctolagus cuniculus (Rabbit), this protein is Alanine--glyoxylate aminotransferase.